We begin with the raw amino-acid sequence, 307 residues long: Ethylmalonyl-CoA decarboxylase (307 aa).

N-acetylalanine is present on A2. K217 carries the post-translational modification N6-acetyllysine; alternate. K217 is modified (N6-succinyllysine; alternate). K301 carries the N6-succinyllysine modification.

This sequence belongs to the enoyl-CoA hydratase/isomerase family.

The protein resides in the cytoplasm. It localises to the cytosol. The enzyme catalyses (2S)-ethylmalonyl-CoA + H(+) = butanoyl-CoA + CO2. The catalysed reaction is (S)-methylmalonyl-CoA + H(+) = propanoyl-CoA + CO2. It catalyses the reaction (2R)-ethylmalonyl-CoA + H(+) = butanoyl-CoA + CO2. Its function is as follows. Decarboxylates ethylmalonyl-CoA, a potentially toxic metabolite, to form butyryl-CoA, suggesting it might be involved in metabolite proofreading. Acts preferentially on (S)-ethylmalonyl-CoA but also has some activity on the (R)-isomer. Also has methylmalonyl-CoA decarboxylase activity at lower level. The protein is Ethylmalonyl-CoA decarboxylase (ECHDC1) of Homo sapiens (Human).